The chain runs to 372 residues: Inner membrane protein YbiR (372 aa).

Residues 1-13 lie on the Periplasmic side of the membrane; it reads MSLPFLRTLQGDR. A run of 2 helical transmembrane segments spans residues 14–34 and 35–55; these read FFQLLILVGIGLSFFVPFAPK and SWPAAIDWHTIITLSGLMLLT. The Periplasmic portion of the chain corresponds to 56–85; that stretch reads KGVELSGYFDVLGRKMVRRFATERRLAMFM. The chain crosses the membrane as a helical span at residues 86-106; the sequence is VLAAALLSTFLTNDVALFIVV. Residues 107–122 lie on the Cytoplasmic side of the membrane; that stretch reads PLTITLKRLCEIPVNR. Residues 123 to 143 form a helical membrane-spanning segment; sequence LIIFEALAVNAGSLLTPIGNP. The Periplasmic segment spans residues 144-155; that stretch reads QNILIWGRSGLS. Residues 156 to 176 form a helical membrane-spanning segment; that stretch reads FAGFIAQMAPLAGAMMLTLLL. Topologically, residues 177–208 are cytoplasmic; the sequence is LCWCCFPGKAMQYHTGVQTPEWKPRLVWSCLG. A helical membrane pass occupies residues 209–229; the sequence is LYIVFLTALEFKQELWGLVIV. Topologically, residues 230–247 are periplasmic; the sequence is AAGFALLARRVVLSVDWT. A helical membrane pass occupies residues 248 to 268; sequence LLLVFMAMFIDVHLLTQLPAL. The Cytoplasmic portion of the chain corresponds to 269-283; that stretch reads QGVLGNVSHLSEPGL. A helical membrane pass occupies residues 284–304; it reads WLTAIGLSQVISNVPSTILLL. Residues 305–309 lie on the Periplasmic side of the membrane; sequence NYVPP. Residues 310 to 330 traverse the membrane as a helical segment; it reads SLLLVWAVNVGGFGLLPGSLA. Residues 331 to 348 lie on the Cytoplasmic side of the membrane; the sequence is NLIALRMANDRRIWWRFH. A helical membrane pass occupies residues 349-369; it reads LYSIPMLLWAALVGYVLLVIL. The Periplasmic segment spans residues 370 to 372; it reads PAN.

This sequence belongs to the CitM (TC 2.A.11) transporter family.

The protein resides in the cell inner membrane. The polypeptide is Inner membrane protein YbiR (ybiR) (Escherichia coli (strain K12)).